Consider the following 320-residue polypeptide: 3-ketodihydrosphingosine reductase TSC10 (320 aa).

The Cytoplasmic segment spans residues 1-254; it reads MKFTLEDQVV…IIAKSLARGD (254 aa). An NADP(+)-binding site is contributed by L11. NADPH-binding residues include G14, S16, and G18. The GXSXG motif lies at 14–18; that stretch reads GGSQG. Residue L19 participates in NADP(+) binding. Positions 41, 45, 89, and 90 each coordinate NADPH. An NADP(+)-binding site is contributed by D89. S166 serves as the catalytic Proton donor. Residues Y180, K184, and S213 each coordinate NADP(+). Catalysis depends on Y180, which acts as the Proton acceptor. K184 acts as the Lowers pKa of active site Tyr in catalysis. The helical transmembrane segment at 255–275 threads the bilayer; the sequence is DDVFTDFVGWMIMGMDLGLTA. The Lumenal portion of the chain corresponds to 276–279; it reads KKSR. A helical membrane pass occupies residues 280–300; sequence FVPLQWIFGVLSNILVVPFYM. The Cytoplasmic segment spans residues 301 to 320; that stretch reads VGCSWYIRKWFRENDGKKAN.

It belongs to the short-chain dehydrogenases/reductases (SDR) family. Dimer or tetramer.

Its subcellular location is the endoplasmic reticulum membrane. The enzyme catalyses sphinganine + NADP(+) = 3-oxosphinganine + NADPH + H(+). It participates in lipid metabolism; sphingolipid metabolism. Functionally, catalyzes the reduction of 3'-oxosphinganine (3-ketodihydrosphingosine/KDS) to sphinganine (dihydrosphingosine/DHS), the second step of de novo sphingolipid biosynthesis. The sequence is that of 3-ketodihydrosphingosine reductase TSC10 from Saccharomyces cerevisiae (strain ATCC 204508 / S288c) (Baker's yeast).